The primary structure comprises 364 residues: Beta-parvin (364 aa).

The disordered stretch occupies residues 1-57 (MSSAPRSPTPRPRRMKKDESFLGKLGGTLARKRRAREVSDLQEEGKNAINSPMSPAL). S7 is subject to Phosphoserine. Positions 36-46 (REVSDLQEEGK) are enriched in basic and acidic residues. A Phosphoserine modification is found at S54. Calponin-homology (CH) domains follow at residues 87–194 (KELV…MHFR) and 254–361 (SVVK…TKYK).

Belongs to the parvin family. Interacts with DYSF. Interacts with ILK, ARHGEF6, PXN (via LD motifs), ACTN2 and actin. As to expression, expressed predominantly in heart and skeletal muscle.

It is found in the cell junction. The protein localises to the focal adhesion. It localises to the cell membrane. Its subcellular location is the cytoplasm. The protein resides in the cytoskeleton. It is found in the cell projection. The protein localises to the lamellipodium. It localises to the myofibril. Its subcellular location is the sarcomere. The protein resides in the z line. In terms of biological role, adapter protein that plays a role in integrin signaling via ILK and in activation of the GTPases CDC42 and RAC1 by guanine exchange factors, such as ARHGEF6. Is involved in the reorganization of the actin cytoskeleton and formation of lamellipodia. Plays a role in cell adhesion, cell spreading, establishment or maintenance of cell polarity, and cell migration. In Homo sapiens (Human), this protein is Beta-parvin (PARVB).